Reading from the N-terminus, the 367-residue chain is tRNA/tmRNA (uracil-C(5))-methyltransferase (367 aa).

S-adenosyl-L-methionine is bound by residues Q182, Y210, N215, E231, and D293. The active-site Nucleophile is the C318. E352 acts as the Proton acceptor in catalysis.

This sequence belongs to the class I-like SAM-binding methyltransferase superfamily. RNA M5U methyltransferase family. TrmA subfamily.

The catalysed reaction is uridine(54) in tRNA + S-adenosyl-L-methionine = 5-methyluridine(54) in tRNA + S-adenosyl-L-homocysteine + H(+). It carries out the reaction uridine(341) in tmRNA + S-adenosyl-L-methionine = 5-methyluridine(341) in tmRNA + S-adenosyl-L-homocysteine + H(+). In terms of biological role, dual-specificity methyltransferase that catalyzes the formation of 5-methyluridine at position 54 (m5U54) in all tRNAs, and that of position 341 (m5U341) in tmRNA (transfer-mRNA). The chain is tRNA/tmRNA (uracil-C(5))-methyltransferase from Neisseria meningitidis serogroup C (strain 053442).